Reading from the N-terminus, the 667-residue chain is Coiled-coil domain-containing protein 154 (667 aa).

Coiled coils occupy residues 76–182 (VVEL…QEAG), 215–302 (RRVD…GQHE), 384–410 (LLRE…SGHL), and 457–521 (LRGV…KEDN).

The protein resides in the early endosome. This is Coiled-coil domain-containing protein 154 from Homo sapiens (Human).